We begin with the raw amino-acid sequence, 137 residues long: Large ribosomal subunit protein uL16 (137 aa).

Belongs to the universal ribosomal protein uL16 family. As to quaternary structure, part of the 50S ribosomal subunit.

Functionally, binds 23S rRNA and is also seen to make contacts with the A and possibly P site tRNAs. This is Large ribosomal subunit protein uL16 from Leuconostoc mesenteroides subsp. mesenteroides (strain ATCC 8293 / DSM 20343 / BCRC 11652 / CCM 1803 / JCM 6124 / NCDO 523 / NBRC 100496 / NCIMB 8023 / NCTC 12954 / NRRL B-1118 / 37Y).